The chain runs to 343 residues: Uroporphyrinogen decarboxylase (343 aa).

Substrate is bound by residues 23–27 (RQAGR), aspartate 73, tyrosine 150, serine 205, and histidine 322.

Belongs to the uroporphyrinogen decarboxylase family. In terms of assembly, homodimer.

The protein resides in the cytoplasm. The enzyme catalyses uroporphyrinogen III + 4 H(+) = coproporphyrinogen III + 4 CO2. The protein operates within porphyrin-containing compound metabolism; protoporphyrin-IX biosynthesis; coproporphyrinogen-III from 5-aminolevulinate: step 4/4. Catalyzes the decarboxylation of four acetate groups of uroporphyrinogen-III to yield coproporphyrinogen-III. The polypeptide is Uroporphyrinogen decarboxylase (Cereibacter sphaeroides (strain ATCC 17029 / ATH 2.4.9) (Rhodobacter sphaeroides)).